Here is a 268-residue protein sequence, read N- to C-terminus: Small ribosomal subunit protein uS2 (268 aa).

The segment at 233-268 (SVREEEFAEAAAEGEEKPARRAPAKKAAKKGDDAQA) is disordered.

Belongs to the universal ribosomal protein uS2 family.

This is Small ribosomal subunit protein uS2 from Stenotrophomonas maltophilia (strain K279a).